A 424-amino-acid chain; its full sequence is Protein TUNICAMYCIN INDUCED 1 (424 aa).

The signal sequence occupies residues 1 to 25 (MGHRVLVYVGALFLILFTIFPSSSA). N-linked (GlcNAc...) asparagine glycosylation is found at N197, N296, and N406.

In terms of tissue distribution, restricted to pollen grains at high levels.

The protein localises to the endoplasmic reticulum. Its function is as follows. Involved in the regulation of pollen surface morphology, probably by modulating the secretion of proteins and/or lipids during pollen development. In Arabidopsis thaliana (Mouse-ear cress), this protein is Protein TUNICAMYCIN INDUCED 1.